Reading from the N-terminus, the 308-residue chain is B- and T-lymphocyte attenuator (308 aa).

The N-terminal stretch at 1 to 29 is a signal peptide; that stretch reads MKTVPAMLVTPRSFREFFILLLGLWSILC. The Extracellular segment spans residues 30 to 183; that stretch reads KEPTKRIGEE…ERPGRTWLLY (154 aa). The 103-residue stretch at 32 to 134 folds into the Ig-like V-type domain; that stretch reads PTKRIGEECR…SANLNSEVIN (103 aa). Intrachain disulfides connect Cys-40–Cys-69, Cys-64–Cys-124, and Cys-78–Cys-85. Asn-49, Asn-74, Asn-81, Asn-148, and Asn-165 each carry an N-linked (GlcNAc...) asparagine glycan. A helical transmembrane segment spans residues 184–204; the sequence is ALLPLGTSLLLLACVCLLCFL. Residues 205-308 lie on the Cytoplasmic side of the membrane; that stretch reads RRIQGKEKKP…TEYASICVRS (104 aa).

Interacts with tyrosine phosphatases PTPN6/SHP-1 and PTPN11/SHP-2. Interacts with TNFRSF14/HVEM (via cysteine-rich domain 1). In terms of processing, phosphorylated on Tyr residues by TNFRSF14 and by antigen receptors cross-linking, both inducing association with PTPN6 and PTPN11. Post-translationally, N-glycosylated.

It localises to the cell membrane. Inhibitory receptor on lymphocytes that negatively regulates antigen receptor signaling via PTPN6/SHP-1 and PTPN11/SHP-2. May interact in cis (on the same cell) or in trans (on other cells) with TNFRSF14. In cis interactions, appears to play an immune regulatory role inhibiting in trans interactions in naive T cells to maintain a resting state. In trans interactions, can predominate during adaptive immune response to provide survival signals to effector T cells. In Rattus norvegicus (Rat), this protein is B- and T-lymphocyte attenuator.